We begin with the raw amino-acid sequence, 1344 residues long: Xanthine dehydrogenase (1344 aa).

Residues 9–96 (SVLVFFVNGK…GCAVTTVEGI (88 aa)) enclose the 2Fe-2S ferredoxin-type domain. [2Fe-2S] cluster contacts are provided by Cys48, Cys53, Cys56, Cys78, Cys118, Cys121, Cys153, and Cys155. The FAD-binding PCMH-type domain maps to 236-425 (FSSERVTWYR…LGIHFQKTTP (190 aa)). Residues 264-271 (LVVGNTEV), Phe344, 354-358 (CLGGN), Asp367, Leu415, and Lys433 each bind FAD. Gln781 and Phe812 together coordinate Mo-molybdopterin. The substrate site is built by Glu816 and Arg894. Arg926 provides a ligand contact to Mo-molybdopterin. Phe928 lines the substrate pocket. Ala1093 contacts Mo-molybdopterin. Glu1276 serves as the catalytic Proton acceptor.

Belongs to the xanthine dehydrogenase family. As to quaternary structure, homodimer. FAD serves as cofactor. Mo-molybdopterin is required as a cofactor. Requires [2Fe-2S] cluster as cofactor.

The protein localises to the peroxisome. The enzyme catalyses xanthine + NAD(+) + H2O = urate + NADH + H(+). It catalyses the reaction hypoxanthine + NAD(+) + H2O = xanthine + NADH + H(+). Functionally, key enzyme in purine degradation. Catalyzes the oxidation of hypoxanthine to xanthine. Catalyzes the oxidation of xanthine to uric acid. This chain is Xanthine dehydrogenase (Xdh), found in Drosophila subobscura (Fruit fly).